A 77-amino-acid chain; its full sequence is MKKQNLIEMEGVVTESLPNAMFRVYLDNGCEVLAHISGKIRRNYIRILLADRVKVELSPYDLTKGRITYRLRTKSNG.

The S1-like domain maps to 1 to 72; sequence MKKQNLIEME…TKGRITYRLR (72 aa).

Belongs to the IF-1 family. As to quaternary structure, component of the 30S ribosomal translation pre-initiation complex which assembles on the 30S ribosome in the order IF-2 and IF-3, IF-1 and N-formylmethionyl-tRNA(fMet); mRNA recruitment can occur at any time during PIC assembly.

Its subcellular location is the plastid. It localises to the chloroplast. Its function is as follows. One of the essential components for the initiation of protein synthesis. Stabilizes the binding of IF-2 and IF-3 on the 30S subunit to which N-formylmethionyl-tRNA(fMet) subsequently binds. Helps modulate mRNA selection, yielding the 30S pre-initiation complex (PIC). Upon addition of the 50S ribosomal subunit IF-1, IF-2 and IF-3 are released leaving the mature 70S translation initiation complex. The chain is Translation initiation factor IF-1, chloroplastic from Zygnema circumcarinatum (Green alga).